A 527-amino-acid chain; its full sequence is DNA polymerase epsilon subunit 2 (527 aa).

Belongs to the DNA polymerase epsilon subunit B family. Component of the DNA polymerase epsilon complex consisting of four subunits: the catalytic subunit POLE and the accessory subunits POLE2, POLE3 and POLE4.

It localises to the nucleus. Accessory component of the DNA polymerase epsilon complex. Participates in DNA repair and in chromosomal DNA replication. This is DNA polymerase epsilon subunit 2 (POLE2) from Bos taurus (Bovine).